Here is an 88-residue protein sequence, read N- to C-terminus: Small ribosomal subunit protein uS17 (88 aa).

The protein belongs to the universal ribosomal protein uS17 family. Part of the 30S ribosomal subunit.

Functionally, one of the primary rRNA binding proteins, it binds specifically to the 5'-end of 16S ribosomal RNA. The chain is Small ribosomal subunit protein uS17 from Methylorubrum extorquens (strain PA1) (Methylobacterium extorquens).